A 143-amino-acid chain; its full sequence is Sirohydrochlorin cobaltochelatase (143 aa).

The active-site Proton acceptor is the H18. Residue H18 participates in Co(2+) binding. H18 contacts Ni(2+). Residues R53 and 78-83 (LAHGVH) contribute to the substrate site. H83 serves as a coordination point for Co(2+). H83 provides a ligand contact to Ni(2+).

The protein belongs to the CbiX family. CbiXS subfamily. In terms of assembly, homotetramer; dimer of dimers.

The enzyme catalyses Co-sirohydrochlorin + 2 H(+) = sirohydrochlorin + Co(2+). The catalysed reaction is Ni-sirohydrochlorin + 2 H(+) = sirohydrochlorin + Ni(2+). It participates in cofactor biosynthesis; adenosylcobalamin biosynthesis; cob(II)yrinate a,c-diamide from sirohydrochlorin (anaerobic route): step 1/10. In terms of biological role, catalyzes the insertion of Co(2+) into sirohydrochlorin as part of the anaerobic pathway to cobalamin biosynthesis. Involved in the biosynthesis of the unique nickel-containing tetrapyrrole coenzyme F430, the prosthetic group of methyl-coenzyme M reductase (MCR), which plays a key role in methanogenesis and anaerobic methane oxidation (Potential). Catalyzes the insertion of Ni(2+) into sirohydrochlorin to yield Ni-sirohydrochlorin (Potential). This Methanothermobacter thermautotrophicus (strain ATCC 29096 / DSM 1053 / JCM 10044 / NBRC 100330 / Delta H) (Methanobacterium thermoautotrophicum) protein is Sirohydrochlorin cobaltochelatase.